We begin with the raw amino-acid sequence, 319 residues long: Glutathione synthetase (319 aa).

In terms of domain architecture, ATP-grasp spans 127–311 (KIFVTEFADL…VASLLWDAIE (185 aa)). Residue 153-209 (RNEMGDIILKPLYGNGGAGVFHSARDDRNFSSLLEMFGQMFREPYIAQEYLPDVRKG) participates in ATP binding. Mg(2+) contacts are provided by Glu282 and Asn284.

It belongs to the prokaryotic GSH synthase family. It depends on Mg(2+) as a cofactor. Mn(2+) serves as cofactor.

It catalyses the reaction gamma-L-glutamyl-L-cysteine + glycine + ATP = glutathione + ADP + phosphate + H(+). It functions in the pathway sulfur metabolism; glutathione biosynthesis; glutathione from L-cysteine and L-glutamate: step 2/2. This Agrobacterium fabrum (strain C58 / ATCC 33970) (Agrobacterium tumefaciens (strain C58)) protein is Glutathione synthetase.